The following is a 191-amino-acid chain: Protein DMP10 (191 aa).

Helical transmembrane passes span 15-35 (FANL…PSFS), 48-68 (LLTI…SFTD), 114-134 (LSFV…ALAV), and 158-178 (LMIK…FAIF).

This sequence belongs to the plant DMP1 protein family. Restricted to flowers.

It localises to the membrane. In terms of biological role, involved in membrane remodeling. This is Protein DMP10 from Arabidopsis thaliana (Mouse-ear cress).